Reading from the N-terminus, the 411-residue chain is Imidazolonepropionase (411 aa).

Fe(3+)-binding residues include histidine 78 and histidine 80. Residues histidine 78 and histidine 80 each coordinate Zn(2+). Arginine 87, tyrosine 150, and histidine 183 together coordinate 4-imidazolone-5-propanoate. Tyrosine 150 serves as a coordination point for N-formimidoyl-L-glutamate. Histidine 248 serves as a coordination point for Fe(3+). Histidine 248 serves as a coordination point for Zn(2+). Glutamine 251 provides a ligand contact to 4-imidazolone-5-propanoate. Aspartate 322 serves as a coordination point for Fe(3+). Aspartate 322 serves as a coordination point for Zn(2+). N-formimidoyl-L-glutamate is bound by residues asparagine 324 and glycine 326. Residue threonine 327 participates in 4-imidazolone-5-propanoate binding.

Belongs to the metallo-dependent hydrolases superfamily. HutI family. Zn(2+) is required as a cofactor. Requires Fe(3+) as cofactor.

It is found in the cytoplasm. The enzyme catalyses 4-imidazolone-5-propanoate + H2O = N-formimidoyl-L-glutamate. The protein operates within amino-acid degradation; L-histidine degradation into L-glutamate; N-formimidoyl-L-glutamate from L-histidine: step 3/3. Its function is as follows. Catalyzes the hydrolytic cleavage of the carbon-nitrogen bond in imidazolone-5-propanoate to yield N-formimidoyl-L-glutamate. It is the third step in the universal histidine degradation pathway. The sequence is that of Imidazolonepropionase from Flavobacterium psychrophilum (strain ATCC 49511 / DSM 21280 / CIP 103535 / JIP02/86).